Reading from the N-terminus, the 138-residue chain is MRHRKIGRKLNCKSDHRNAIFKNMACSLILNEIIKTTLAKAKELRRIVEPMITLSKIDTVAHRRLLFSRIRNNEVIAKLFKKIGPIFYNRSGGYTRILKCGFRFGDKAPMAYIELVDRVRKSKEKKKLSSNNNLIKNK.

It belongs to the bacterial ribosomal protein bL17 family. In terms of assembly, part of the 50S ribosomal subunit. Contacts protein L32.

The polypeptide is Large ribosomal subunit protein bL17 (Buchnera aphidicola subsp. Schizaphis graminum (strain Sg)).